A 551-amino-acid polypeptide reads, in one-letter code: Solute carrier family 22 member 13 (551 aa).

The Cytoplasmic segment spans residues 1–20 (MAQFVQVLAEIGDFGRFQIQ). The chain crosses the membrane as a helical span at residues 21-41 (LLILLCVLNFLSPFYFFAHVF). Residues 42–138 (MVLDEPHHCA…LVCDRKHLKD (97 aa)) lie on the Extracellular side of the membrane. N-linked (GlcNAc...) asparagine glycosylation is found at N57, N61, N92, and N104. Residues 139 to 159 (TTQSVFMAGLLVGTLMFGPLC) traverse the membrane as a helical segment. Topologically, residues 160-167 (DRIGRKAT) are cytoplasmic. A helical membrane pass occupies residues 168-188 (ILAQLLLFTLIGLATAFVPSF). Residues 189-195 (ELYMALR) are Extracellular-facing. The chain crosses the membrane as a helical span at residues 196–216 (FAVATAVAGLSFSNVTLLTEW). At 217-224 (VGPSWRTQ) the chain is on the cytoplasmic side. The chain crosses the membrane as a helical span at residues 225–245 (AVVLAQCNFSLGQMVLAGLAY). Over 246 to 251 (GFRNWR) the chain is Extracellular. Residues 252–272 (LLQITGTAPGLLLFFYFWALP) form a helical membrane-spanning segment. Residues 273–332 (ESARWLLTRGRMDEAIQLIQKAASVNRRKLSPELMNQLVPEKTGPSGNALDLFRHPQLRK) lie on the Cytoplasmic side of the membrane. A helical membrane pass occupies residues 333-353 (VTLIIFCVWFVDSLGYYGLSL). Q354 is a topological domain (extracellular). A helical membrane pass occupies residues 355–375 (VGDFGLDVYLTQLIFGAVEVP). At 376 to 397 (ARCSSIFMMQRFGRKWSQLGTL) the chain is on the cytoplasmic side. Residues 398 to 418 (VLGGLMCIIIIFIPADLPVVV) traverse the membrane as a helical segment. Residues 419–427 (TMLAVVGKM) are Extracellular-facing. A helical transmembrane segment spans residues 428–448 (ATAAAFTISYVYSAELFPTIL). At 449–452 (RQTG) the chain is on the cytoplasmic side. A helical transmembrane segment spans residues 453–473 (MGLVGIFSRIGGILTPLVILL). The Extracellular portion of the chain corresponds to 474 to 478 (GEYHA). The helical transmembrane segment at 479-499 (ALPMLIYGSLPIVAGLLCTLL) threads the bilayer. The Cytoplasmic segment spans residues 500–551 (PETHGQGLKDTLQDLELGPHPRSPKSVPSEKETEAKGRTSSPGVAFVSSTYF). Residues 511–551 (LQDLELGPHPRSPKSVPSEKETEAKGRTSSPGVAFVSSTYF) form a disordered region. Residues 527–536 (PSEKETEAKG) show a composition bias toward basic and acidic residues. Residues 537 to 551 (RTSSPGVAFVSSTYF) show a composition bias toward polar residues.

The protein belongs to the major facilitator (TC 2.A.1) superfamily. Organic cation transporter (TC 2.A.1.19) family. In terms of processing, glycosylated. Ubiquitous. Highly expressed in kidneys and to a weaker extent in brain, heart, and intestine. In kidneys, expressed in proximal convoluted tubule. In kidneys, also expressed in cortical collecting duct, whereas glomerulus and thick ascending limb exhibit no expression.

The protein localises to the apical cell membrane. The catalysed reaction is urate(out) + (S)-lactate(in) = urate(in) + (S)-lactate(out). The enzyme catalyses urate(out) + succinate(in) = urate(in) + succinate(out). It catalyses the reaction urate(out) + glutathione(in) = urate(in) + glutathione(out). It carries out the reaction nicotinate(in) + urate(out) = nicotinate(out) + urate(in). The catalysed reaction is orotate(out) + a carboxylate(in) = orotate(in) + a carboxylate(out). Anion antiporter that mediates the transport of urate, orotate and nicotinate in exchange for organic or inorganic anions. Translocates urate and orotate across the apical membrane of proximal tubule epithelial cells and involved in urate renal reabsorption. Possibly involved in orotate renal reabsorption and nicotinate intestinal reabsorption. Mediates urate uptake by an exchange with organic anions such as (S)-lactate, succinate, glutathione and nicotinate. Urate and orotate transports are Cl(-)-dependent. Shows similar transport characteristics as the urate/orotate renal antiporter SLC22A12/URAT1 and may act as a compensator of SLC22A12/URAT1 in certain conditions. In Homo sapiens (Human), this protein is Solute carrier family 22 member 13.